Here is a 766-residue protein sequence, read N- to C-terminus: Lanosterol synthase ERG7 (766 aa).

A disordered region spans residues 1–47; it reads MVANSTGRDASALKSRKRAADSESEPLLKQGQPFPKQPRIGSELDKT. One copy of the PFTB 1 repeat lies at 148–190; it reads ATAIYNYISARAHPEDGGWGLHIEGESSVFGTLMNYVALRLVG. The active-site Proton donor is the aspartate 482. PFTB repeat units follow at residues 586–626 and 635–676; these read IRTA…KHIG and SRRG…VVQT.

Belongs to the terpene cyclase/mutase family.

It localises to the lipid droplet. It is found in the endoplasmic reticulum membrane. The catalysed reaction is (S)-2,3-epoxysqualene = lanosterol. Its pathway is terpene metabolism; lanosterol biosynthesis; lanosterol from farnesyl diphosphate: step 3/3. It participates in steroid metabolism; ergosterol biosynthesis. In terms of biological role, lanosterol synthase; part of the third module of ergosterol biosynthesis pathway that includes the late steps of the pathway. ERG7 catalyzes the cyclization of (S)-2,3 oxidosqualene to lanosterol, a reaction that forms the sterol core. The third module or late pathway involves the ergosterol synthesis itself through consecutive reactions that mainly occur in the endoplasmic reticulum (ER) membrane. Firstly, the squalene synthase ERG9 catalyzes the condensation of 2 farnesyl pyrophosphate moieties to form squalene, which is the precursor of all steroids. Squalene synthase is crucial for balancing the incorporation of farnesyl diphosphate (FPP) into sterol and nonsterol isoprene synthesis. Secondly, squalene is converted into lanosterol by the consecutive action of the squalene epoxidase ERG1 and the lanosterol synthase ERG7. Then, the delta(24)-sterol C-methyltransferase ERG6 methylates lanosterol at C-24 to produce eburicol. Eburicol is the substrate of the sterol 14-alpha demethylase encoded by CYP51A, CYP51B and CYP51C, to yield 4,4,24-trimethyl ergosta-8,14,24(28)-trienol. CYP51B encodes the enzyme primarily responsible for sterol 14-alpha-demethylation, and plays an essential role in ascospore formation. CYP51A encodes an additional sterol 14-alpha-demethylase, induced on ergosterol depletion and responsible for the intrinsic variation in azole sensitivity. The third CYP51 isoform, CYP51C, does not encode a sterol 14-alpha-demethylase, but is required for full virulence on host wheat ears. The C-14 reductase ERG24 then reduces the C14=C15 double bond which leads to 4,4-dimethylfecosterol. A sequence of further demethylations at C-4, involving the C-4 demethylation complex containing the C-4 methylsterol oxidases ERG25, the sterol-4-alpha-carboxylate 3-dehydrogenase ERG26 and the 3-keto-steroid reductase ERG27, leads to the production of fecosterol via 4-methylfecosterol. ERG28 has a role as a scaffold to help anchor ERG25, ERG26 and ERG27 to the endoplasmic reticulum. The C-8 sterol isomerase ERG2 then catalyzes the reaction which results in unsaturation at C-7 in the B ring of sterols and thus converts fecosterol to episterol. The sterol-C5-desaturases ERG3A and ERG3BB then catalyze the introduction of a C-5 double bond in the B ring to produce 5-dehydroepisterol. The C-22 sterol desaturases ERG5A and ERG5B further convert 5-dehydroepisterol into ergosta-5,7,22,24(28)-tetraen-3beta-ol by forming the C-22(23) double bond in the sterol side chain. Finally, ergosta-5,7,22,24(28)-tetraen-3beta-ol is substrate of the C-24(28) sterol reductase ERG4 to produce ergosterol. The chain is Lanosterol synthase ERG7 from Gibberella zeae (strain ATCC MYA-4620 / CBS 123657 / FGSC 9075 / NRRL 31084 / PH-1) (Wheat head blight fungus).